We begin with the raw amino-acid sequence, 366 residues long: MMKQTIAVICGGRSGEHEVSLTSAQSIVDALDRFRFNVLTIGIDRHGAWWLGSNVIDNLRKGQQPYGQRVYFIPDPTCPGLIEENPVTRKPVPVDVFFPVLHGPNGEDGTIQGLFEAANVPYVGCGVLASACGMDKAIMKALFAQSDLPQLPYLVVLRNRWESAREQVIDEVEDRLGYPCFVKPANMGSSVGISKATNRAELVAAFDDAVRYDRKLIVEKGINVREIEVSVLGNDEVVASVPGEIVPAHEFYDYDAKYAAADSRLLIPAPIAAADVATFQEMAIRAFRAIDGSGLSRVDFLLDKNSGEVYINEINTLPGFTSISMYPKLWEATGIPYGELLSRLVDLGLARYREKQRNATERLPRL.

An ATP-grasp domain is found at K140–D346. E173–E228 lines the ATP pocket. 3 residues coordinate Mg(2+): D299, E313, and N315.

Belongs to the D-alanine--D-alanine ligase family. It depends on Mg(2+) as a cofactor. The cofactor is Mn(2+).

The protein resides in the cytoplasm. It catalyses the reaction 2 D-alanine + ATP = D-alanyl-D-alanine + ADP + phosphate + H(+). It participates in cell wall biogenesis; peptidoglycan biosynthesis. Functionally, cell wall formation. This is D-alanine--D-alanine ligase from Heliobacterium modesticaldum (strain ATCC 51547 / Ice1).